Here is a 446-residue protein sequence, read N- to C-terminus: Ribosomal protein uS12 methylthiotransferase RimO (446 aa).

In terms of domain architecture, MTTase N-terminal spans 4–119 (YKVGMVSLGC…IDKVIKEFIE (116 aa)). [4Fe-4S] cluster-binding residues include cysteine 13, cysteine 48, cysteine 82, cysteine 157, cysteine 161, and cysteine 164. The Radical SAM core domain occupies 143-373 (TTQKESAYIR…MLSQEKISND (231 aa)). The TRAM domain maps to 376-442 (KLKVNKKYDI…DYDLIGVVED (67 aa)).

The protein belongs to the methylthiotransferase family. RimO subfamily. [4Fe-4S] cluster serves as cofactor.

The protein localises to the cytoplasm. It catalyses the reaction L-aspartate(89)-[ribosomal protein uS12]-hydrogen + (sulfur carrier)-SH + AH2 + 2 S-adenosyl-L-methionine = 3-methylsulfanyl-L-aspartate(89)-[ribosomal protein uS12]-hydrogen + (sulfur carrier)-H + 5'-deoxyadenosine + L-methionine + A + S-adenosyl-L-homocysteine + 2 H(+). In terms of biological role, catalyzes the methylthiolation of an aspartic acid residue of ribosomal protein uS12. The polypeptide is Ribosomal protein uS12 methylthiotransferase RimO (Clostridium botulinum (strain Eklund 17B / Type B)).